A 175-amino-acid chain; its full sequence is Protein MODIFYING WALL LIGNIN-1 (175 aa).

The signal sequence occupies residues 1–24; the sequence is MFIFLFGLAAFFLCLSAEFQKAKA. Residues 25–52 lie on the Cytoplasmic side of the membrane; that stretch reads LLRAQVFLKGKDLKWDGESCYLPENRAF. A helical membrane pass occupies residues 53 to 73; the sequence is GLGIAALVCVSVAQIVGNVVI. The Extracellular segment spans residues 74–86; that stretch reads CRGFTKTDKTRTT. A helical membrane pass occupies residues 87–107; that stretch reads IFCIILLLFSWVNFAVAVTLI. Residues 108–135 lie on the Cytoplasmic side of the membrane; sequence SVGASMNREQIYGKGWLNRECYLVKDGV. Residues 136–156 form a helical membrane-spanning segment; it reads FAASGFLSVTTMAAILGAFAF. Residues 157–175 are Extracellular-facing; the sequence is KVKPSLQVENHDKRHTQNV.

It belongs to the DESIGUAL family. In terms of assembly, interacts with CRK19.

It is found in the cell membrane. Functionally, together with MWL2, contributes to secondary cell wall biology, specifically lignin biosynthesis. The polypeptide is Protein MODIFYING WALL LIGNIN-1 (Arabidopsis thaliana (Mouse-ear cress)).